The primary structure comprises 1220 residues: DNA-directed RNA polymerase subunit beta' (1220 aa).

Residues C60, C62, C75, and C78 each contribute to the Zn(2+) site. Residues D449, D451, and D453 each coordinate Mg(2+). The Zn(2+) site is built by C818, C892, C899, and C902.

The protein belongs to the RNA polymerase beta' chain family. In terms of assembly, the RNAP catalytic core consists of 2 alpha, 1 beta, 1 beta' and 1 omega subunit. When a sigma factor is associated with the core the holoenzyme is formed, which can initiate transcription. Mg(2+) is required as a cofactor. The cofactor is Zn(2+).

The enzyme catalyses RNA(n) + a ribonucleoside 5'-triphosphate = RNA(n+1) + diphosphate. DNA-dependent RNA polymerase catalyzes the transcription of DNA into RNA using the four ribonucleoside triphosphates as substrates. In Lacticaseibacillus casei (strain BL23) (Lactobacillus casei), this protein is DNA-directed RNA polymerase subunit beta'.